We begin with the raw amino-acid sequence, 231 residues long: Peroxisomal membrane protein 11E (231 aa).

Topologically, residues M1 to K91 are cytoplasmic. Residues N92 to G108 traverse the membrane as a helical segment. Topologically, residues R109 to S202 are lumenal. Residues P203–L222 traverse the membrane as a helical segment. Residues P223–P231 lie on the Cytoplasmic side of the membrane.

Belongs to the peroxin-11 family. In terms of assembly, homooligomer. Interacts with ARC5 and FIS1B on peroxisomes. In terms of tissue distribution, expressed in leaves and developing siliques.

Its subcellular location is the peroxisome membrane. Functionally, involved in peroxisomal proliferation. Promotes peroxisomal duplication, aggregation or elongation without fission. The polypeptide is Peroxisomal membrane protein 11E (PEX11E) (Arabidopsis thaliana (Mouse-ear cress)).